Here is a 338-residue protein sequence, read N- to C-terminus: Holliday junction branch migration complex subunit RuvB (338 aa).

The tract at residues 1-181 (MDRIVEIEKV…FGMDFRLQFY (181 aa)) is large ATPase domain (RuvB-L). ATP contacts are provided by residues L20, R21, G62, K65, T66, T67, 128–130 (EDF), R171, Y181, and R218. T66 contributes to the Mg(2+) binding site. Residues 182–252 (STAELSRIIQ…RAKEGLNALG (71 aa)) are small ATPAse domain (RuvB-S). Residues 255 to 338 (SLGFDEMDIK…NRTKGLFDGE (84 aa)) form a head domain (RuvB-H) region. DNA contacts are provided by R309 and R314.

Belongs to the RuvB family. Homohexamer. Forms an RuvA(8)-RuvB(12)-Holliday junction (HJ) complex. HJ DNA is sandwiched between 2 RuvA tetramers; dsDNA enters through RuvA and exits via RuvB. An RuvB hexamer assembles on each DNA strand where it exits the tetramer. Each RuvB hexamer is contacted by two RuvA subunits (via domain III) on 2 adjacent RuvB subunits; this complex drives branch migration. In the full resolvosome a probable DNA-RuvA(4)-RuvB(12)-RuvC(2) complex forms which resolves the HJ.

The protein resides in the cytoplasm. The catalysed reaction is ATP + H2O = ADP + phosphate + H(+). Functionally, the RuvA-RuvB-RuvC complex processes Holliday junction (HJ) DNA during genetic recombination and DNA repair, while the RuvA-RuvB complex plays an important role in the rescue of blocked DNA replication forks via replication fork reversal (RFR). RuvA specifically binds to HJ cruciform DNA, conferring on it an open structure. The RuvB hexamer acts as an ATP-dependent pump, pulling dsDNA into and through the RuvAB complex. RuvB forms 2 homohexamers on either side of HJ DNA bound by 1 or 2 RuvA tetramers; 4 subunits per hexamer contact DNA at a time. Coordinated motions by a converter formed by DNA-disengaged RuvB subunits stimulates ATP hydrolysis and nucleotide exchange. Immobilization of the converter enables RuvB to convert the ATP-contained energy into a lever motion, pulling 2 nucleotides of DNA out of the RuvA tetramer per ATP hydrolyzed, thus driving DNA branch migration. The RuvB motors rotate together with the DNA substrate, which together with the progressing nucleotide cycle form the mechanistic basis for DNA recombination by continuous HJ branch migration. Branch migration allows RuvC to scan DNA until it finds its consensus sequence, where it cleaves and resolves cruciform DNA. In Campylobacter curvus (strain 525.92), this protein is Holliday junction branch migration complex subunit RuvB.